We begin with the raw amino-acid sequence, 113 residues long: Large ribosomal subunit protein uL22 (113 aa).

It belongs to the universal ribosomal protein uL22 family. In terms of assembly, part of the 50S ribosomal subunit.

Functionally, this protein binds specifically to 23S rRNA; its binding is stimulated by other ribosomal proteins, e.g. L4, L17, and L20. It is important during the early stages of 50S assembly. It makes multiple contacts with different domains of the 23S rRNA in the assembled 50S subunit and ribosome. The globular domain of the protein is located near the polypeptide exit tunnel on the outside of the subunit, while an extended beta-hairpin is found that lines the wall of the exit tunnel in the center of the 70S ribosome. The chain is Large ribosomal subunit protein uL22 from Halalkalibacterium halodurans (strain ATCC BAA-125 / DSM 18197 / FERM 7344 / JCM 9153 / C-125) (Bacillus halodurans).